Reading from the N-terminus, the 127-residue chain is Phospholipase A2 homolog otoconin-22 (127 aa).

An N-linked (GlcNAc...) asparagine glycan is attached at N20. 7 disulfides stabilise this stretch: C26–C120, C28–C44, C43–C99, C49–C127, C50–C92, C59–C85, and C78–C90. Residue N113 is glycosylated (N-linked (GlcNAc...) asparagine).

Belongs to the phospholipase A2 family. Monomer. In terms of tissue distribution, otoconial membrane in the maculae of the saccule and utricle. Otoconia are composites of proteins and inorganic crystals formed in the peripheral portion of the vestibular system of vertebrates. The otoconial membranes contain small crystals of calcium carbonate known as otoliths (ear stones) if there is a single deposit or as otoconia (ear dust) if there are many. Each mineral polymorph of otoconia has a protein unique to that polymorph.

The protein localises to the secreted. Its function is as follows. Major protein of the aragonitic otoconia. It is unlikely that this protein has phospholipase A2 activity. The chain is Phospholipase A2 homolog otoconin-22 from Xenopus laevis (African clawed frog).